The following is a 270-amino-acid chain: uncharacterized protein (270 aa).

It is found in the cytoplasm. This is an uncharacterized protein from Schizosaccharomyces pombe (strain 972 / ATCC 24843) (Fission yeast).